Here is an 871-residue protein sequence, read N- to C-terminus: Translation initiation factor IF-2 (871 aa).

Disordered stretches follow at residues 60 to 101 (KKNI…QEVK) and 184 to 203 (ESLK…KKES). A compositionally biased stretch (basic residues) spans 61 to 72 (KNIKTPTAKKPK). Positions 73–101 (KENIKEQEKLNESEKKEPKKEEKLKQEVK) are enriched in basic and acidic residues. The tr-type G domain maps to 370–537 (TRAPVITIMG…IVLLQADILE (168 aa)). A G1 region spans residues 379–386 (GHVDHGKT). Position 379–386 (379–386 (GHVDHGKT)) interacts with GTP. The segment at 404–408 (GITQH) is G2. The segment at 425–428 (DTPG) is G3. Residues 425-429 (DTPGH) and 479-482 (NKMD) each bind GTP. The G4 stretch occupies residues 479–482 (NKMD). Residues 515–517 (SAK) are G5.

It belongs to the TRAFAC class translation factor GTPase superfamily. Classic translation factor GTPase family. IF-2 subfamily.

The protein resides in the cytoplasm. One of the essential components for the initiation of protein synthesis. Protects formylmethionyl-tRNA from spontaneous hydrolysis and promotes its binding to the 30S ribosomal subunits. Also involved in the hydrolysis of GTP during the formation of the 70S ribosomal complex. In Campylobacter jejuni subsp. jejuni serotype O:23/36 (strain 81-176), this protein is Translation initiation factor IF-2.